A 217-amino-acid polypeptide reads, in one-letter code: GTP cyclohydrolase 1 (217 aa).

Zn(2+) is bound by residues Cys109, His112, and Cys180.

This sequence belongs to the GTP cyclohydrolase I family. In terms of assembly, toroid-shaped homodecamer, composed of two pentamers of five dimers.

It catalyses the reaction GTP + H2O = 7,8-dihydroneopterin 3'-triphosphate + formate + H(+). The protein operates within cofactor biosynthesis; 7,8-dihydroneopterin triphosphate biosynthesis; 7,8-dihydroneopterin triphosphate from GTP: step 1/1. In Vibrio parahaemolyticus serotype O3:K6 (strain RIMD 2210633), this protein is GTP cyclohydrolase 1.